Consider the following 962-residue polypeptide: Nonribosomal peptide synthetase atqA (962 aa).

The adenylation (A) domain stretch occupies residues 34-462; the sequence is AANTTEGIIA…DGRTKEMVNI (429 aa). A Carrier domain is found at 595–672; that stretch reads SAEEATILSI…GLCQRIAATS (78 aa). The residue at position 630 (Ser630) is an O-(pantetheine 4'-phosphoryl)serine. The thioesterase (TE) domain stretch occupies residues 694–951; that stretch reads PLWLVHPGVG…KPEYVANFAK (258 aa).

The protein belongs to the NRP synthetase family.

The protein operates within secondary metabolite biosynthesis. Functionally, nonribosomal peptide synthetase; part of the gene cluster that mediates the biosynthesis of asterriquinone CT5, a natural product that displays potential biological activities including antitumor and insulin mimic activities. The nonribosomal peptide synthetase atqA is responsible for the production of the benzoquinone derivative didemethylasterriquinone D (DDAQ D), via condensation of 2 indole pyruvic acid (IPA) molecules. The symmetric connectivity of the 2 IPA molecules is thought to arise by head-to-tail dual Claisen condensations catalyzed by the TE domain of atqA. DDAQ D represents the core structure of asterriquinones and is further modified by yet unidentified tailoring enzymes to lead to the production of asterriquinone CT5. This Aspergillus terreus (strain NIH 2624 / FGSC A1156) protein is Nonribosomal peptide synthetase atqA.